Consider the following 69-residue polypeptide: U2-agatoxin-Ao1w (69 aa).

The N-terminal stretch at 1 to 20 is a signal peptide; the sequence is MRAIISLLLISAMVFSMIEA. The propeptide occupies 21-34; that stretch reads VPVEEGLQLFEGER. 3 disulfide bridges follow: Cys37-Cys53, Cys44-Cys58, and Cys52-Cys68.

It belongs to the neurotoxin 01 (U2-agtx) family. As to expression, expressed by the venom gland.

It is found in the secreted. Insect active toxin causing rapid but reversible paralysis in crickets. No activity shown in mammals. Does not show effect on mammalian voltage-gated calcium channels. The protein is U2-agatoxin-Ao1w of Agelena orientalis (Funnel-web spider).